Consider the following 236-residue polypeptide: Phosphoribosylaminoimidazole-succinocarboxamide synthase (236 aa).

The protein belongs to the SAICAR synthetase family.

The catalysed reaction is 5-amino-1-(5-phospho-D-ribosyl)imidazole-4-carboxylate + L-aspartate + ATP = (2S)-2-[5-amino-1-(5-phospho-beta-D-ribosyl)imidazole-4-carboxamido]succinate + ADP + phosphate + 2 H(+). Its pathway is purine metabolism; IMP biosynthesis via de novo pathway; 5-amino-1-(5-phospho-D-ribosyl)imidazole-4-carboxamide from 5-amino-1-(5-phospho-D-ribosyl)imidazole-4-carboxylate: step 1/2. This Chlorobium phaeobacteroides (strain BS1) protein is Phosphoribosylaminoimidazole-succinocarboxamide synthase.